The primary structure comprises 698 residues: Polyribonucleotide nucleotidyltransferase (698 aa).

2 residues coordinate Mg(2+): D487 and D493. The KH domain occupies P555–I614. Positions G624 to K692 constitute an S1 motif domain.

It belongs to the polyribonucleotide nucleotidyltransferase family. Mg(2+) is required as a cofactor.

The protein resides in the cytoplasm. It catalyses the reaction RNA(n+1) + phosphate = RNA(n) + a ribonucleoside 5'-diphosphate. Involved in mRNA degradation. Catalyzes the phosphorolysis of single-stranded polyribonucleotides processively in the 3'- to 5'-direction. The protein is Polyribonucleotide nucleotidyltransferase of Lachnoclostridium phytofermentans (strain ATCC 700394 / DSM 18823 / ISDg) (Clostridium phytofermentans).